We begin with the raw amino-acid sequence, 416 residues long: Serine hydroxymethyltransferase (416 aa).

Residues L121 and 125–127 (GHL) each bind (6S)-5,6,7,8-tetrahydrofolate. At K230 the chain carries N6-(pyridoxal phosphate)lysine. 354–356 (SPF) serves as a coordination point for (6S)-5,6,7,8-tetrahydrofolate.

The protein belongs to the SHMT family. In terms of assembly, homodimer. Requires pyridoxal 5'-phosphate as cofactor.

Its subcellular location is the cytoplasm. It catalyses the reaction (6R)-5,10-methylene-5,6,7,8-tetrahydrofolate + glycine + H2O = (6S)-5,6,7,8-tetrahydrofolate + L-serine. Its pathway is one-carbon metabolism; tetrahydrofolate interconversion. It functions in the pathway amino-acid biosynthesis; glycine biosynthesis; glycine from L-serine: step 1/1. In terms of biological role, catalyzes the reversible interconversion of serine and glycine with tetrahydrofolate (THF) serving as the one-carbon carrier. This reaction serves as the major source of one-carbon groups required for the biosynthesis of purines, thymidylate, methionine, and other important biomolecules. Also exhibits THF-independent aldolase activity toward beta-hydroxyamino acids, producing glycine and aldehydes, via a retro-aldol mechanism. This Prochlorococcus marinus (strain MIT 9211) protein is Serine hydroxymethyltransferase.